We begin with the raw amino-acid sequence, 24 residues long: Hyaluronidase (24 aa).

In terms of tissue distribution, expressed by the venom gland.

It is found in the secreted. It catalyses the reaction Random hydrolysis of (1-&gt;4)-linkages between N-acetyl-beta-D-glucosamine and D-glucuronate residues in hyaluronate.. Its function is as follows. Possesses high activity against hyaluronan in vitro. This is Hyaluronidase from Tityus stigmurus (Brazilian scorpion).